Consider the following 78-residue polypeptide: Defensin-like protein 173 (78 aa).

The first 23 residues, Met-1 to Pro-23, serve as a signal peptide directing secretion. Cystine bridges form between Cys-27-Cys-71, Cys-34-Cys-56, Cys-40-Cys-65, and Cys-44-Cys-67.

This sequence belongs to the DEFL family.

The protein localises to the secreted. The chain is Defensin-like protein 173 (LCR63) from Arabidopsis thaliana (Mouse-ear cress).